The sequence spans 528 residues: MQTVHEMLRRAVSRVPHRWAIVDAARSTFDICRTGETSRNEGSATARLWPQPARPLAVVSGNSVEAVIAVLALHRLQAVPALMNPRLKPAEISELVARGEMARAVVANDAGVMEAIRTRVPSVCVLALDDLVSGSRVPEVAGKSLPPPPCEPEQAGFVFYTSGTTGLPKGAVIPQRAAESRVLFMATQAGLRHGSHNVVLGLMPLYHTIGFFAVLVAAMAFDGTYVVVEEFDAGNVLKLIERERVTAMFATPTHLDALTTAVEQAGARLESLEHVTFAGATMPDTVLERVNRFIPGEKVNIYGTTEAMNSLYMRAVRIAGTVMRPGFFSEVRIVRVGGDVDDGCPTVKRASWRWRRRMRPFQATLTNLRLLQKSFRKAGTGRAICVRDGSGNIVVLGRVDDMIISGGENIHPSEVERILAAAPGVAEVVVIGVKDERWGQSVVACVVLQPGASASAERLDAFCRASALADFKRPRRYVFLDELPKSAMNKVLRRQLMQHVSATSSAAVVPAPAVKQRTYAPSGRAIAR.

Residues 161–169 (TSGTTGLPK), 300–305 (NIYGTT), and asparagine 409 each bind ATP.

The protein belongs to the ATP-dependent AMP-binding enzyme family. Homodimer. Requires Mg(2+) as cofactor.

It catalyses the reaction 4-chlorobenzoate + ATP + CoA = 4-chlorobenzoyl-CoA + AMP + diphosphate. It participates in xenobiotic degradation; 4-chlorobenzoate degradation; 4-hydroxybenzoate from 4-chlorobenzoate: step 2/3. Unaffected by 5,5'-dithiobis-(2-nitrobenzoic acid), 4-chloromercuribenzoate and sodium azide. Inhibited by Cu(2+), Fe(2+) and Zn(2+). Unaffected by Na(+), K(+) and Li(+). Catalyzes the formation of chlorobenzoyl-CoA via a 2 step reaction. First 4-chlorobenzoyl is adenylated by ATP, followed by acyl transfer from the 4-chlorobenzoyl-AMP intermediate to CoA. Benzoate, 4-bromobenzoate, 4-iodobenzoate and 4-methylbenzoate also act as substrates. Inactive towards 4-aminobenzoate, 4-hydroxybenzoate, 2-aminobenzoate, 2,3-dihydroxybenzoate, 4-coumarate and the aliphatic carboxylic acids palmate, caproate, laurate and butyrate. Negligible activity is detected when ATP is replaced by UTP, CTP or GTP as cosubstrate. This Pseudomonas sp. (strain CBS-3) protein is 4-chlorobenzoate--CoA ligase.